Consider the following 345-residue polypeptide: Heat-inducible transcription repressor HrcA (345 aa).

This sequence belongs to the HrcA family.

In terms of biological role, negative regulator of class I heat shock genes (grpE-dnaK-dnaJ and groELS operons). Prevents heat-shock induction of these operons. The polypeptide is Heat-inducible transcription repressor HrcA (Lachnoclostridium phytofermentans (strain ATCC 700394 / DSM 18823 / ISDg) (Clostridium phytofermentans)).